Here is a 1063-residue protein sequence, read N- to C-terminus: Retinoblastoma-like protein 1 (1063 aa).

3 positions are modified to phosphothreonine: Thr-332, Thr-369, and Thr-385. The tract at residues 383 to 584 (VTTPVASATQ…WEALHASANR (202 aa)) is domain A. The interval 383-944 (VTTPVASATQ…GRVKSFALKY (562 aa)) is pocket; binds T and E1A. The tract at residues 585–779 (VPSCEEVIFP…AQDAHLTGVS (195 aa)) is spacer. A phosphoserine mark is found at Ser-640, Ser-650, Ser-748, and Ser-761. A domain B region spans residues 780–944 (KPKRTGSLAL…GRVKSFALKY (165 aa)). Phosphoserine occurs at positions 959, 970, and 983. A Phosphothreonine modification is found at Thr-992. 2 positions are modified to phosphoserine: Ser-1004 and Ser-1036.

This sequence belongs to the retinoblastoma protein (RB) family. Component of the DREAM complex (also named LINC complex) at least composed of E2F4, E2F5, LIN9, LIN37, LIN52, LIN54, MYBL1, MYBL2, RBL1, RBL2, RBBP4, TFDP1 and TFDP2. The complex exists in quiescent cells where it represses cell cycle-dependent genes. It dissociates in S phase when LIN9, LIN37, LIN52 and LIN54 form a subcomplex that binds to MYBL2. Interacts with AATF. Interacts with KDM5A. Interacts with KMT5B and KMT5C. Interacts with USP4. Interacts with RBBP9. Cell-cycle arrest properties are inactivated by phosphorylation on Thr-332, Ser-640, Ser-959 and Ser-970 by CDK4. In terms of tissue distribution, highly expressed in fetal heart and liver. Expressed at low levels in all other fetal tissues except skeletal muscle. High levels in neonatal spleen and thymus with low levels in other tissues. In adult, highly expressed in testis. Barely detectable in other tissues.

It is found in the nucleus. In terms of biological role, key regulator of entry into cell division. Directly involved in heterochromatin formation by maintaining overall chromatin structure and, in particular, that of constitutive heterochromatin by stabilizing histone methylation. Recruits and targets histone methyltransferases KMT5B and KMT5C, leading to epigenetic transcriptional repression. Controls histone H4 'Lys-20' trimethylation. Probably acts as a transcription repressor by recruiting chromatin-modifying enzymes to promoters. Potent inhibitor of E2F-mediated trans-activation. May act as a tumor suppressor. The chain is Retinoblastoma-like protein 1 (Rbl1) from Mus musculus (Mouse).